Here is a 59-residue protein sequence, read N- to C-terminus: Small ribosomal subunit protein bS21 (59 aa).

The tract at residues 40-59 is disordered; that stretch reads KPSVKRKKKSEAARKRKSFR. Residues 43 to 59 are compositionally biased toward basic residues; sequence VKRKKKSEAARKRKSFR.

This sequence belongs to the bacterial ribosomal protein bS21 family.

This is Small ribosomal subunit protein bS21 from Desulforamulus reducens (strain ATCC BAA-1160 / DSM 100696 / MI-1) (Desulfotomaculum reducens).